The primary structure comprises 1118 residues: Cytospin-A (1118 aa).

2 disordered regions span residues 1–157 and 198–221; these read MKKS…DGQI and GGKE…PHVS. Polar residues-rich tracts occupy residues 57–102 and 112–123; these read NPTS…TKET and SRASANKKQSAA. Residues 144-153 are compositionally biased toward basic and acidic residues; the sequence is SESRMSKSKS. Positions 204 to 215 are enriched in acidic residues; the sequence is EGPEEEEEEEEE. Residues 225 to 264 adopt a coiled-coil conformation; the sequence is AADVESTLILLQEQNQAIREELNLLKSENRMLKDRLNALG. Residues 289-379 form a disordered region; it reads AGSGQSDGGG…RRGSSGNASE (91 aa). A compositionally biased stretch (low complexity) spans 343–363; that stretch reads SSDDALDAPSGASSSSESECA. Coiled coils occupy residues 384–438 and 475–796; these read CLTE…MDSL and GRYM…RGRV. Disordered stretches follow at residues 771-790, 837-876, and 920-1001; these read QEKN…RKQD, FDSA…PPAA, and SAAS…ERKD. The span at 838–855 shows a compositional bias: polar residues; the sequence is DSASQGPPSNGASVTPTV. The segment covering 861-872 has biased composition (pro residues); sequence PRTPLSPSPMKT. Residues 930 to 945 are compositionally biased toward polar residues; sequence QRVSNMDSTKTISVSR. The span at 946 to 956 shows a compositional bias: basic and acidic residues; sequence RSSEEMKRDMS. Residues 961–986 show a composition bias toward low complexity; it reads ASSTSLMAMSAASAPLSLSSSSPTAS. Positions 1012-1117 constitute a Calponin-homology (CH) domain; that stretch reads GSKRNALLKW…YVTAIYKYFE (106 aa).

Belongs to the cytospin-A family. In terms of assembly, may interact with both microtubules and actin cytoskeleton.

Its subcellular location is the cytoplasm. It localises to the cytoskeleton. The protein localises to the spindle. The protein resides in the cell junction. It is found in the gap junction. Involved in cytokinesis and spindle organization. May play a role in actin cytoskeleton organization and microtubule stabilization and hence required for proper cell adhesion and migration. The chain is Cytospin-A (specc1l) from Takifugu rubripes (Japanese pufferfish).